The following is a 970-amino-acid chain: Toxin subunit YenC2 (970 aa).

RHS repeat units follow at residues 168–182 (AGQCVSYYDAAGLIQ), 297–311 (GVVTTYTYEAETQRL), 329–343 (LQDLRYEYDPVGNVL), 361–375 (VPENAYRYDSLYQLV), 408–422 (NYTRTYTYDSAGNLM), 500–514 (DDSESYRYDGSSQRI), 580–594 (NDQIRWSYDNLTCSS), 606–620 (SMEEYYPYGGTAVWA), and 640–654 (DATGLYYYGFRYYQP). The segment at 610–690 (YYPYGGTAVW…PLRLTDPDGM (81 aa)) is RHS-repeat associated core domain. The segment at 849-950 (TEAFITGIRS…YNCSGIISGL (102 aa)) is deaminase domain.

The protein belongs to the RHS family. In terms of assembly, semipurified toxin complex consists of at least YenA1-YenA2-YenB-YenC1-YenC2-Chi1-Chi2. YenB and the N-terminus of YenC2 form a large hollow shell of beta-strands. The shell is closed at both ends, within which the C-terminus of YenC2 is probably found. The C-terminal region dissociates from the YenB-YenC2 complex at pH 4.5 but not 7.5. The Yen-TC:K9 subcomplex is about 26 nm tall and 22 nm in diameter with 5-fold symmetry and 5 copies of YenA1, YenA2, Chi1 and Chi2; the chitinase subunits may be solvent accessible on the exterior the complex. The Yen-TC:K9 subcomplex has no insecticidal activity. The native complex with additional YenB, YenC1 and YenC2 subunits is 16 nm taller and is insecticidal; the toxicity-conferring subunits are present at about 1 copy each.

It localises to the secreted. Its activity is regulated as follows. Toxin complex is secreted when grown at 25 degrees Celsius or less; at higher temperatures the proteins are present intracellularly but not secreted. Its function is as follows. Part of an orally active toxin complex (TC) with strong insecticidal effects on larvae of the Coleoptera Costelytra zealandica, Acrossidius tasmania and Adoryphorus couloni and some Lepidoptera larvae. The TC has an endochitinase activity. This is Toxin subunit YenC2 from Yersinia entomophaga.